We begin with the raw amino-acid sequence, 152 residues long: Putative toxin MJ1304 (152 aa).

In terms of domain architecture, HEPN spans 15–135 (IKRAEEDLEV…EECLKDAENV (121 aa)).

In terms of biological role, putative toxin component of a putative type VII toxin-antitoxin (TA) system. Its cognate antitoxin might be MJ1305. This is Putative toxin MJ1304 from Methanocaldococcus jannaschii (strain ATCC 43067 / DSM 2661 / JAL-1 / JCM 10045 / NBRC 100440) (Methanococcus jannaschii).